The following is a 2769-amino-acid chain: Teneurin-4 (2769 aa).

The segment covering 1–22 (MDVKERKPYRSLTRRRDAERRY) has biased composition (basic and acidic residues). Residues 1–45 (MDVKERKPYRSLTRRRDAERRYTSSSADSEEGKAPQKSYSSSETL) are disordered. One can recognise a Teneurin N-terminal domain in the interval 1 to 341 (MDVKERKPYR…KPSKYCNWKC (341 aa)). Residues 1-345 (MDVKERKPYR…YCNWKCAALS (345 aa)) lie on the Cytoplasmic side of the membrane. Phosphoserine is present on Ser-124. Positions 130 to 233 (RLWGRSTRSG…PPAGGAQEPA (104 aa)) are disordered. Low complexity predominate over residues 134–155 (RSTRSGRSSCLSSRANSNLTLT). The span at 156 to 166 (DTEHENTETDH) shows a compositional bias: basic and acidic residues. Position 178 is a phosphothreonine (Thr-178). Residues 187–211 (HTPNQHHAASINSLNRGNFTPRSNP) are compositionally biased toward polar residues. The chain crosses the membrane as a helical span at residues 346–366 (AIVISATLVILLAYFVAMHLF). The Extracellular segment spans residues 367-2769 (GLNWHLQPME…FMRQSEMGRR (2403 aa)). The disordered stretch occupies residues 400-426 (PSGGTGLETPDRKGKGTTEGKPSSFFP). A compositionally biased stretch (basic and acidic residues) spans 408–417 (TPDRKGKGTT). An N-linked (GlcNAc...) asparagine glycan is attached at Asn-467. The interval 507–526 (ARSLEGTPRQSRGTVPPSSH) is disordered. Residues 514–526 (PRQSRGTVPPSSH) show a composition bias toward polar residues. EGF-like domains follow at residues 562 to 593 (SVDNCPSNCYGNGDCISGTCHCFLGFLGPDCG), 594 to 624 (RASCPVLCSGNGQYMKGRCLCHSGWKGAECD), 626 to 658 (PTNQCIDVACSNHGTCITGTCICNPGYKGESCE), 659 to 690 (EVDCMDPTCSGRGVCVRGECHCSVGWGGTNCE), 692 to 725 (PRATCLDQCSGHGTFLPDTGLCSCDPSWTGHDCS), 726 to 757 (IEICAADCGGHGVCVGGTCRCEDGWMGAACDQ), 758 to 787 (RACHPRCAEHGTCRDGKCECSPGWNGEHCT), and 788 to 831 (IAHY…AGCD). Disulfide bonds link Cys-566–Cys-576, Cys-570–Cys-581, Cys-583–Cys-592, Cys-601–Cys-612, Cys-614–Cys-623, Cys-630–Cys-641, Cys-635–Cys-646, Cys-648–Cys-657, Cys-662–Cys-673, Cys-667–Cys-678, Cys-680–Cys-689, Cys-700–Cys-713, Cys-715–Cys-724, Cys-729–Cys-739, Cys-733–Cys-744, Cys-746–Cys-755, Cys-760–Cys-770, Cys-764–Cys-775, Cys-777–Cys-786, Cys-800–Cys-810, Cys-804–Cys-819, and Cys-821–Cys-830. Residues Asn-940 and Asn-1259 are each glycosylated (N-linked (GlcNAc...) asparagine). NHL repeat units follow at residues 1216–1259 (SCPS…PSGN), 1264–1308 (LELR…IKST), 1334–1378 (TRCG…NGII), 1393–1444 (LSCD…VAGR), and 1523–1566 (CFSG…IRKN). One copy of the YD 1 repeat lies at 1576–1595 (YELSSPIDQELYLFDTTGKH). Asn-1609 carries N-linked (GlcNAc...) asparagine glycosylation. YD repeat units lie at residues 1612 to 1632 (YTGDGDITLITDNNGNMVNVR), 1675 to 1694 (YHGNSGLLATKSNENGWTTF), and 1695 to 1717 (YEYDSFGRLTNVTFPTGQVSSFR). Asn-1705, Asn-1741, Asn-1799, and Asn-1884 each carry an N-linked (GlcNAc...) asparagine glycan. YD repeat units follow at residues 1887–1906 (YSPGGYIAGIQRGIMSERME), 1928–1946 (YLEKSMVLLLHSQRQYIFE), 1947–1967 (FDKNDRLSSVTMPNVARQTLE), 1974–1991 (YYRNIYQPPEGNASVIQD), 1992–2013 (FTEDGHLLHTFYLGTGRRVIYK), 2014–2031 (YGKLSKLAETLYDTTKVS), 2034–2054 (YDETAGMLKTINLQNEGFTCT), 2057–2077 (YRQIGPLIDRQIFRFTEEGMV), 2085–2104 (YDNSFRVTSMQAVINETPLP), 2110–2127 (YDDVSGKTEQFGKFGVIY), 2128–2154 (YDINQIITTAVMTHTKHFDAYGRMKEV), 2156–2169 (YEIFRSLMYWMTVQ), 2170–2193 (YDNMGRVVKKELKVGPYANTTRYS), 2196–2216 (YDADGQLQTVSINDKPLWRYS), 2217–2237 (YDLNGNLHLLSPGNSARLTPL), 2239–2259 (YDIRDRITRLGDVQYKMDEDG), 2271–2291 (YNSAGLLIKAYNRAGSWSVRY), and 2293–2313 (YDGLGRRVSSKSSHSHHLQFF). N-linked (GlcNAc...) asparagine glycosylation occurs at Asn-1985. A glycan (N-linked (GlcNAc...) asparagine) is linked at Asn-2188. Residue Asn-2328 is glycosylated (N-linked (GlcNAc...) asparagine). One copy of the YD 23 repeat lies at 2339 to 2380 (YDLQGHLFAMELSSGDEFYIACDNIGTPLAVFSGTGLMIKQI). Asn-2646 is a glycosylation site (N-linked (GlcNAc...) asparagine).

It belongs to the tenascin family. Teneurin subfamily. Homodimer; disulfide-linked. May also form heterodimer with either TENM1 or TENM2 or TENM3.

It is found in the cell membrane. Its subcellular location is the cell projection. The protein resides in the nucleus. The protein localises to the cytoplasm. In terms of biological role, involved in neural development, regulating the establishment of proper connectivity within the nervous system. Plays a role in the establishment of the anterior-posterior axis during gastrulation. Regulates the differentiation and cellular process formation of oligodendrocytes and myelination of small-diameter axons in the central nervous system (CNS). Promotes activation of focal adhesion kinase. May function as a cellular signal transducer. This chain is Teneurin-4 (TENM4), found in Homo sapiens (Human).